The sequence spans 248 residues: 4-hydroxy-tetrahydrodipicolinate reductase (248 aa).

NAD(+) is bound by residues Gly-8–Met-13, Gly-75–Thr-77, and Ala-99–Met-102. Residue His-131 is the Proton donor/acceptor of the active site. His-132 serves as a coordination point for (S)-2,3,4,5-tetrahydrodipicolinate. The Proton donor role is filled by Lys-135. Gly-141–Thr-142 contributes to the (S)-2,3,4,5-tetrahydrodipicolinate binding site.

This sequence belongs to the DapB family.

It localises to the cytoplasm. The enzyme catalyses (S)-2,3,4,5-tetrahydrodipicolinate + NAD(+) + H2O = (2S,4S)-4-hydroxy-2,3,4,5-tetrahydrodipicolinate + NADH + H(+). It carries out the reaction (S)-2,3,4,5-tetrahydrodipicolinate + NADP(+) + H2O = (2S,4S)-4-hydroxy-2,3,4,5-tetrahydrodipicolinate + NADPH + H(+). Its pathway is amino-acid biosynthesis; L-lysine biosynthesis via DAP pathway; (S)-tetrahydrodipicolinate from L-aspartate: step 4/4. Catalyzes the conversion of 4-hydroxy-tetrahydrodipicolinate (HTPA) to tetrahydrodipicolinate. The protein is 4-hydroxy-tetrahydrodipicolinate reductase of Campylobacter jejuni subsp. doylei (strain ATCC BAA-1458 / RM4099 / 269.97).